The chain runs to 521 residues: Transcription activator of gluconeogenesis SS1G_02293 (521 aa).

Acidic residues predominate over residues 1-12 (MSGETEIDDPEV). The interval 1–75 (MSGETEIDDP…KFDPKDPLRP (75 aa)) is disordered. Composition is skewed to basic and acidic residues over residues 21–49 (YSDH…RPDG) and 65–74 (PKFDPKDPLR). The segment at residues 84 to 112 (CFACQRAHLTCGDERPCQRCIKRGLADAC) is a DNA-binding region (zn(2)-C6 fungal-type). Disordered regions lie at residues 273-308 (SGSA…NPPF), 322-358 (VAPP…RDPS), and 478-501 (NTGN…PRMR). The segment covering 275 to 287 (SAETPPQDSSAGM) has biased composition (polar residues). Composition is skewed to low complexity over residues 297–308 (NNNPAFNNNPPF), 337–351 (KSGP…SALG), and 480–494 (GNSG…GRGS). The PAS domain maps to 426 to 497 (TLFEYEDFML…GSSGRGSFTT (72 aa)).

Belongs to the ERT1/acuK family.

The protein localises to the nucleus. In terms of biological role, transcription factor which regulates nonfermentable carbon utilization. Activator of gluconeogenetic genes. The protein is Transcription activator of gluconeogenesis SS1G_02293 of Sclerotinia sclerotiorum (strain ATCC 18683 / 1980 / Ss-1) (White mold).